The sequence spans 544 residues: Probable protein kinase UbiB (544 aa).

The 379-residue stretch at 123–501 folds into the Protein kinase domain; it reads DFDLVPLASA…KRQQATGKFL (379 aa). Residues 129-137 and Lys-152 contribute to the ATP site; that span reads LASASIAQV. Asp-287 acts as the Proton acceptor in catalysis. 2 helical membrane passes run 496-516 and 519-539; these read ATGKFLFGVGATLVVCSAILV and TYEQLSLATAIAGVTFWLFSW.

The protein belongs to the ABC1 family. UbiB subfamily.

The protein localises to the cell inner membrane. The protein operates within cofactor biosynthesis; ubiquinone biosynthesis [regulation]. Is probably a protein kinase regulator of UbiI activity which is involved in aerobic coenzyme Q (ubiquinone) biosynthesis. The polypeptide is Probable protein kinase UbiB (Vibrio vulnificus (strain YJ016)).